A 93-amino-acid polypeptide reads, in one-letter code: Cobalt transport protein CbiN (93 aa).

Transmembrane regions (helical) follow at residues 5 to 25 and 63 to 83; these read LILL…NHGG and LLFT…LGYA.

Belongs to the CbiN family. As to quaternary structure, forms an energy-coupling factor (ECF) transporter complex composed of an ATP-binding protein (A component, CbiO), a transmembrane protein (T component, CbiQ) and 2 possible substrate-capture proteins (S components, CbiM and CbiN) of unknown stoichimetry.

The protein resides in the cell inner membrane. The protein operates within cofactor biosynthesis; adenosylcobalamin biosynthesis. Its function is as follows. Part of the energy-coupling factor (ECF) transporter complex CbiMNOQ involved in cobalt import. The sequence is that of Cobalt transport protein CbiN from Klebsiella pneumoniae subsp. pneumoniae (strain ATCC 700721 / MGH 78578).